The sequence spans 319 residues: G-protein coupled receptor 171 (319 aa).

Residues 1–21 (MTNSSTFCPVYRDLEPFTYFF) lie on the Extracellular side of the membrane. Asn3 is a glycosylation site (N-linked (GlcNAc...) asparagine). The chain crosses the membrane as a helical span at residues 22–42 (YLVFLIGIIGSCFATWAFIQK). The Cytoplasmic portion of the chain corresponds to 43–48 (TTNHRC). Residues 49–69 (VSIYLINLLTADFLLTLALPV) traverse the membrane as a helical segment. The Extracellular segment spans residues 70 to 89 (KIIVDLGVAPWKLRIFHCQV). The chain crosses the membrane as a helical span at residues 90-110 (TACLIYINMYLSIIFLAFVSI). Residues 111-132 (DRCLQLIHSCKIYRIQEPGFAK) lie on the Cytoplasmic side of the membrane. A helical membrane pass occupies residues 133–153 (MISAVVWLMVLLIMVPNMVIP). Topologically, residues 154-181 (IKDIKEKSNVGCMEFKKEFGRNWHLLTN) are extracellular. The helical transmembrane segment at 182–202 (FICVAIFLNFSVIILISNFLA) threads the bilayer. Residues 203–224 (IRQLYRNRDNTNYPSVKSALLH) lie on the Cytoplasmic side of the membrane. Residues 225 to 245 (ILLVTASYIICFVPYHAVRIP) form a helical membrane-spanning segment. Residues 246–268 (YTLSQTEVISDCSTRIALFKAKE) are Extracellular-facing. Residues 269–289 (ATLLLAVSNLCFDPILYYHLS) form a helical membrane-spanning segment. Residues 290 to 319 (KAFRLKVTETFASPKKSKPLEERLRSENDV) are Cytoplasmic-facing.

Belongs to the G-protein coupled receptor 1 family. Highly expressed in hypothalamus, including the arcuate nucleus, paraventricular nucleus and dorsomedial hypothalamus. Expressed in periaqueductal gray (at protein level), found primarily in GABAergic neurons and to a lesser extent in glutamatergic neurons. Expressed in T cells and natural killer cells.

It localises to the cell membrane. Functionally, G-protein coupled receptor for Big LEN, a 16-amino acid neuropeptide produced from the precursor protein, proSAAS (encoded by PCSK1N). Acts through a G(i)-alpha-mediated pathway in response to Big LEN. Big LEN-GPR171 system plays an important role in regulating feeding and metabolism. Also plays a role in modulating fear and anxiety-like behaviors in the basolateral amygdala. Big LEN-GPR171 modulates the mu-type opioid receptor signaling and antinociception. Acts as a negative regulator T cell function. This Mus musculus (Mouse) protein is G-protein coupled receptor 171 (Gpr171).